Here is an 856-residue protein sequence, read N- to C-terminus: MESQYNAAAIEQKWQQDWVKQGLDKTPENSNKPKFYALSMFPYPSGNLHMGHVRNYVITDVIARLKRLQGYRVLHPMGWDAFGLPAENAAIDRGIPPAEWTYKNMSQMKQQLQTLGLSIDWEREVATCAPEYYKWTQWLFLQLYQAGLAYQKEAAVNWDPIDQTVLANEQVDSEGYSWRSGAKVERKLLRQWFLKITDYAEQLLTDLDKLPGWPDRVKLMQENWIGKSVGAYLEFPIKGSEEKIAVFTTRPDTVYGVTYVVLAPEHPLTLKVTTPEQKAAVDAFIEEVSNESEIERTAEDKPKRGILTGGTAINPFNGQEIPILIADYVLYEYGTGAVMGVPAHDTRDFKFAKEKQLPIKVVIIPENSDNTNPPLTEAYTDPGIMVNSGIFDGIQSTEGKTAIIEYAEKEGYGKARIQYRLRDWLISRQRYWGCPIPVVHCPSCGTVAVPDADLPVKLPENVEFTGRDASPLAKLEDWINVPCPSCGEPAKRETDTMDTFIDSSWYYLRYTDANNNQEAFNLEKANDWMAIDQYVGGIEHAILHLLYSRFFTKALRDRGLVNIDEPFKRLLTQGMVQGLTYKNPQTGKYVPSENVIFQDDHYRDKETGEILSFFYEKMSKSKYNGVDPKQVLGKYGADTARMFILFKAPPEKDLEWDDADVEGQFRFLNRVWRLVANYLENKPKTVKKASELTKEDKDLRRAIHTAIKEISEDLEGDYQFNTAVSELMKLSNALTDAKCLESGVYQEGIETLLILLAPFAPHIAEELWHNLGYEKSIHLQSWPTVNPDALVVDEITLVIQIMGKTRGTIQVSATATKDELEKLARESEVGQRYLDGQDVKKVIVVPGKLVNFVIAK.

A 'HIGH' region motif is present at residues 42–52 (PYPSGNLHMGH). The short motif at 617-621 (KMSKS) is the 'KMSKS' region element. Lys620 lines the ATP pocket.

Belongs to the class-I aminoacyl-tRNA synthetase family.

The protein resides in the cytoplasm. It carries out the reaction tRNA(Leu) + L-leucine + ATP = L-leucyl-tRNA(Leu) + AMP + diphosphate. The sequence is that of Leucine--tRNA ligase from Rippkaea orientalis (strain PCC 8801 / RF-1) (Cyanothece sp. (strain PCC 8801)).